The following is a 345-amino-acid chain: Phosphoribosylformylglycinamidine cyclo-ligase (345 aa).

Belongs to the AIR synthase family.

It localises to the cytoplasm. It catalyses the reaction 2-formamido-N(1)-(5-O-phospho-beta-D-ribosyl)acetamidine + ATP = 5-amino-1-(5-phospho-beta-D-ribosyl)imidazole + ADP + phosphate + H(+). It participates in purine metabolism; IMP biosynthesis via de novo pathway; 5-amino-1-(5-phospho-D-ribosyl)imidazole from N(2)-formyl-N(1)-(5-phospho-D-ribosyl)glycinamide: step 2/2. In Ligilactobacillus salivarius (strain UCC118) (Lactobacillus salivarius), this protein is Phosphoribosylformylglycinamidine cyclo-ligase.